The sequence spans 229 residues: Interleukin-22 receptor subunit alpha-2 (229 aa).

The N-terminal stretch at 1–19 (MPKHCFLGLLIMLLTTATE) is a signal peptide. 2 Fibronectin type-III domains span residues 28–127 (KPQK…TKLD) and 128–229 (PPVV…VQIP). Asparagine 54 is a glycosylation site (N-linked (GlcNAc...) asparagine). 2 disulfide bridges follow: cysteine 76/cysteine 84 and cysteine 204/cysteine 225.

The protein belongs to the type II cytokine receptor family.

It is found in the secreted. Functionally, receptor for IL22. Binds to IL22, prevents interaction with the functional IL-22R complex and blocks the activity of IL22 (in vitro). May play an important role as an IL22 antagonist in the regulation of inflammatory responses. This chain is Interleukin-22 receptor subunit alpha-2 (Il22ra2), found in Rattus norvegicus (Rat).